The following is a 331-amino-acid chain: 3-dehydroquinate synthase homolog (331 aa).

It belongs to the archaeal-type DHQ synthase family.

In Persephonella marina (strain DSM 14350 / EX-H1), this protein is 3-dehydroquinate synthase homolog.